The following is a 99-amino-acid chain: UPF0320 protein YER188C-A (99 aa).

Belongs to the UPF0320 family.

In Saccharomyces cerevisiae (strain ATCC 204508 / S288c) (Baker's yeast), this protein is UPF0320 protein YER188C-A.